The primary structure comprises 569 residues: Glutamate--tRNA ligase (569 aa).

The short motif at 108–118 is the 'HIGH' region element; the sequence is PNPDFVLHLGS.

This sequence belongs to the class-I aminoacyl-tRNA synthetase family. Glutamate--tRNA ligase type 2 subfamily.

It localises to the cytoplasm. The catalysed reaction is tRNA(Glu) + L-glutamate + ATP = L-glutamyl-tRNA(Glu) + AMP + diphosphate. Catalyzes the attachment of glutamate to tRNA(Glu) in a two-step reaction: glutamate is first activated by ATP to form Glu-AMP and then transferred to the acceptor end of tRNA(Glu). In Thermofilum pendens (strain DSM 2475 / Hrk 5), this protein is Glutamate--tRNA ligase.